Reading from the N-terminus, the 378-residue chain is 3-hydroxyisobutyryl-CoA hydrolase 1 (378 aa).

Alanine 2 carries the N-acetylalanine modification. Substrate is bound by residues glutamate 94, glycine 119, glutamate 142, and aspartate 150.

This sequence belongs to the enoyl-CoA hydratase/isomerase family. Expressed in roots, leaves, flowers and siliques.

It localises to the peroxisome. The catalysed reaction is 3-hydroxy-2-methylpropanoyl-CoA + H2O = 3-hydroxy-2-methylpropanoate + CoA + H(+). It functions in the pathway amino-acid degradation; L-valine degradation. Its activity is regulated as follows. Inhibited by copper. Functionally, involved in valine catabolism. May be indirectly involved in benzoic acid biosynthesis and in cold signaling and cold tolerance. The polypeptide is 3-hydroxyisobutyryl-CoA hydrolase 1 (CHY1) (Arabidopsis thaliana (Mouse-ear cress)).